The primary structure comprises 1174 residues: MGCAASSQQTTATGGQPAAGEKANPAPANNNPNAANKAETTGAAEELTKESEPFVEPDPNYPDLSKHNNYLAESLTPSIYNKICNLRTLSGYSVDGCMQTGVDNPGHPFIKTVGLVAGDEECYDLFADLFDPTIDKRHNGYPRNAKHTTDLNPDHLKGGDDFDPKYVLSCRVRTGRCIRGYGLPPHCTRAERRDVEKVCKDALATLDGPLKGTYYPLTGMTEEMQDKLIADHFLFDKPVSPLLMSARMARDWPDGRGIWHNADKNFLVWINEEDHTRVISMETSGNMKNVFKRFCNGLNKVENALKAKGYEFSWNEHLGYVLTCPSNLGTGVRAGVHIKIPLFSKHAGFESILKHYRLQKRGTGGVDTASTDGTFDISNLDRLGTSEVQQVQSVVDGVKKLIELEKALEKGSDISGQIPRDPAIVRAEQVKEGYPDLSKHNNHLAHCLTYDIWKSLKDKKTPSGFTLDGCIQTGVMNPGHPHIMTVGMVAGDEESYDVFADIFDPVIDARHGGYPKDAVHVTNINHADLKGGDNLDPKYVLSCRVRTGRSIIGYSLPPHCTVEERAAVETITIGALDKFDGDLQGKYYPLEGMSDETQTQLIDDHFLFDKPVSPLLTAARMHRDWPQGRGIWHNENKNFLVWVNEEDHIRVISMEKDGNMRAVFKRFCEGLQKFEQMIKKDGKEFMWNKHLGYVLTCPSNLGTGLRAGVHVKLPLLSKYPRFDQILRALRLQKRGTGGVDTASTDGTFDISNLDRLGSSEVQQVQFVVDGVELLVQMEKKLEKGEDIFDILPQQCRPKPPIKPFSYDYPDFSLHNNWMSKCMTEEIYNKLCNLKTKGGVTLNDCIQTGIDNPGHPYIMTVGLVAGDEECYEVFAPLFDPVISARHGGYALDAKHPTNLNAAELKGGDDLDPEFVLSCRVRTGRCIRGLALPPCCTRAERAEVEKITTEALSTLSGPLKGKYYPLTGMTDEEQEKLIEDHFLFDKPVSPLLLCANMARDWPQGRGIWHNDEKNFLVWVNEEDHTRVISMEKSGNMKRVFERFCDGLKKVEDSIKSKGYQFMWNEHLGYVLTCPSNLGTGLRAGVHVKVPLLSQQKIFDSILDHMRLQKRGTGGVDTASTDGTFDISNSDRIGFSEVHLVQQLVDGVKLLVNLEKALMKGEDINSLLPEKLREDSS.

A compositionally biased stretch (polar residues) spans 1–14 (MGCAASSQQTTATG). The disordered stretch occupies residues 1–62 (MGCAASSQQT…PFVEPDPNYP (62 aa)). The span at 18–39 (AAGEKANPAPANNNPNAANKAE) shows a compositional bias: low complexity. One can recognise a Phosphagen kinase N-terminal 1 domain in the interval 53–139 (PFVEPDPNYP…FDPTIDKRHN (87 aa)). The 1; approximate repeat unit spans residues 61–414 (YPDLSKHNNY…EKALEKGSDI (354 aa)). The region spanning 166-408 (YVLSCRVRTG…KKLIELEKAL (243 aa)) is the Phosphagen kinase C-terminal 1 domain. Residues 169-173 (SCRVR), histidine 232, arginine 277, and 333-337 (RAGVH) contribute to the ATP site. The Phosphagen kinase N-terminal 2 domain occupies 426–512 (RAEQVKEGYP…FDPVIDARHG (87 aa)). The stretch at 434 to 787 (YPDLSKHNNH…EKKLEKGEDI (354 aa)) is one 2; approximate repeat. The 243-residue stretch at 539–781 (YVLSCRVRTG…ELLVQMEKKL (243 aa)) folds into the Phosphagen kinase C-terminal 2 domain. ATP is bound by residues 542–546 (SCRVR), histidine 605, arginine 706, 734–739 (RGTGGV), and aspartate 749. Residues 800-886 (PIKPFSYDYP…FDPVISARHG (87 aa)) enclose the Phosphagen kinase N-terminal 3 domain. The stretch at 808–1161 (YPDFSLHNNW…EKALMKGEDI (354 aa)) is one 3; approximate repeat. Residues 913–1155 (FVLSCRVRTG…KLLVNLEKAL (243 aa)) enclose the Phosphagen kinase C-terminal 3 domain.

The protein belongs to the ATP:guanido phosphotransferase family. In terms of assembly, monomer.

The protein localises to the cytoplasm. It is found in the cytoskeleton. It localises to the flagellum axoneme. It carries out the reaction creatine + ATP = N-phosphocreatine + ADP + H(+). Functionally, this axonemal protein participates in an energy shuttle that utilizes phosphocreatine to transfer the energy from ATP generated by the mitochondrion in the sperm head to dynein in the distal portions of the flagellum. The polypeptide is Creatine kinase, flagellar (Strongylocentrotus purpuratus (Purple sea urchin)).